The following is a 170-amino-acid chain: MIIKGRAHKFGDDVDTDAIIPGPYLRTTDPYELASHCMAGIDENFPKKVKEGDVIVAGENFGCGSSREQAVIAIKYCGIKAVIAKSFARIFYRNAINVGLIPIIANTDEIKDGDIVEIDLDKEEIVITNKNKTIKCETPKGLEREILAAGGLVNYLKKRKLIQSKKGVKT.

A YLRT motif is present at residues 24–27 (YLRT).

It belongs to the LeuD family. LeuD type 2 subfamily. In terms of assembly, heterotetramer of 2 HacA and 2 HacB proteins. Cannot form a complex with LeuC.

The enzyme catalyses (2R)-homocitrate = (2R,3S)-homoisocitrate. It carries out the reaction (2R)-homocitrate = cis-homoaconitate + H2O. The catalysed reaction is (2R,3S)-homoisocitrate = cis-homoaconitate + H2O. It catalyses the reaction cis-(homo)2aconitate + H2O = (2R,3S)-iso(homo)2citrate. The enzyme catalyses cis-(homo)3aconitate + H2O = (2R,3S)-iso(homo)3citrate. It carries out the reaction (R)-malate = maleate + H2O. The catalysed reaction is cis-aconitate + H2O = D-threo-isocitrate. It participates in organic acid metabolism; 2-oxosuberate biosynthesis. Functionally, component of a hydro-lyase with broad substrate specificity for cis-unsaturated tricarboxylic acids. Catalyzes both the reversible dehydration of (R)-homocitrate ((R)-2-hydroxybutane-1,2,4-tricarboxylate) to produce cis-homoaconitate ((Z)-but-1-ene-1,2,4-tricarboxylate), and its hydration to homoisocitrate ((1R,2S)-1-hydroxybutane-1,2,4-tricarboxylate). Is also able to hydrate the analogous longer chain substrates cis-homo(2)-aconitate, cis-homo(3)-aconitate, and even the non-physiological cis-homo(4)-aconitate with similar efficiency. These reactions are part of the biosynthesis pathway of coenzyme B. Can also catalyze the hydration of maleate to (R)-malate, and that of cis-aconitate. Cannot catalyze the hydration of citraconate and the dehydration of (S)-homocitrate, citramalate, 2-isopropylmalate, 3-isopropylmalate, citrate or threo-DL-isocitrate. This Methanocaldococcus jannaschii (strain ATCC 43067 / DSM 2661 / JAL-1 / JCM 10045 / NBRC 100440) (Methanococcus jannaschii) protein is Methanogen homoaconitase small subunit (hacB).